Reading from the N-terminus, the 270-residue chain is Thymidylate synthase (270 aa).

DUMP-binding positions include Arg28 and 133 to 134; that span reads RR. Cys153 acts as the Nucleophile in catalysis. Residues 173-176, Asn184, and 214-216 each bind dUMP; these read RSAD and HIY. Asp176 contributes to the (6R)-5,10-methylene-5,6,7,8-tetrahydrofolate binding site. Ala269 is a binding site for (6R)-5,10-methylene-5,6,7,8-tetrahydrofolate.

It belongs to the thymidylate synthase family. Bacterial-type ThyA subfamily. As to quaternary structure, homodimer.

The protein resides in the cytoplasm. It carries out the reaction dUMP + (6R)-5,10-methylene-5,6,7,8-tetrahydrofolate = 7,8-dihydrofolate + dTMP. Its pathway is pyrimidine metabolism; dTTP biosynthesis. Its function is as follows. Catalyzes the reductive methylation of 2'-deoxyuridine-5'-monophosphate (dUMP) to 2'-deoxythymidine-5'-monophosphate (dTMP) while utilizing 5,10-methylenetetrahydrofolate (mTHF) as the methyl donor and reductant in the reaction, yielding dihydrofolate (DHF) as a by-product. This enzymatic reaction provides an intracellular de novo source of dTMP, an essential precursor for DNA biosynthesis. In Corynebacterium diphtheriae (strain ATCC 700971 / NCTC 13129 / Biotype gravis), this protein is Thymidylate synthase.